The sequence spans 364 residues: Aromatic prenyltransferase (364 aa).

The first 22 residues, 1–22, serve as a signal peptide directing secretion; that stretch reads MDRNQWTLALMALMRFAHRAFI. 2 N-linked (GlcNAc...) asparagine glycosylation sites follow: Asn142 and Asn337.

The protein belongs to the aromatic prenyltransferase family.

Prenyltransferase that attaches isoprenoid moieties to carbon atoms of aromatic substrates in an enzyme-catalyzed Friedel-Crafts reaction. The protein is Aromatic prenyltransferase of Talaromyces marneffei (strain ATCC 18224 / CBS 334.59 / QM 7333) (Penicillium marneffei).